Here is an 84-residue protein sequence, read N- to C-terminus: Cell division topological specificity factor (84 aa).

The protein belongs to the MinE family.

Its function is as follows. Prevents the cell division inhibition by proteins MinC and MinD at internal division sites while permitting inhibition at polar sites. This ensures cell division at the proper site by restricting the formation of a division septum at the midpoint of the long axis of the cell. This is Cell division topological specificity factor from Azotobacter vinelandii (strain DJ / ATCC BAA-1303).